A 237-amino-acid polypeptide reads, in one-letter code: ATP synthase subunit a (237 aa).

The next 5 membrane-spanning stretches (helical) occupy residues 17-37 (LSDMLMITITSLIVFIIAVAA), 75-95 (FLTLGVTLIMYVFVANMLGLP), 112-132 (DATVTLTLAVMVVGLTHYYGV), 179-201 (ILLGLLASLGTHYGVLGAVGAAI), and 214-234 (GTIQAFIFTMLTMVYMAHKVS).

This sequence belongs to the ATPase A chain family. As to quaternary structure, F-type ATPases have 2 components, CF(1) - the catalytic core - and CF(0) - the membrane proton channel. CF(1) has five subunits: alpha(3), beta(3), gamma(1), delta(1), epsilon(1). CF(0) has three main subunits: a(1), b(2) and c(9-12). The alpha and beta chains form an alternating ring which encloses part of the gamma chain. CF(1) is attached to CF(0) by a central stalk formed by the gamma and epsilon chains, while a peripheral stalk is formed by the delta and b chains.

It is found in the cell membrane. Its function is as follows. Key component of the proton channel; it plays a direct role in the translocation of protons across the membrane. This is ATP synthase subunit a from Geobacillus kaustophilus (strain HTA426).